The primary structure comprises 123 residues: Double-stranded DNA deaminase immunity protein (123 aa).

As to quaternary structure, the toxic domain forms a 1:1 complex with the DddI immunity protein. This protein blocks the active site of the toxin.

Immunity protein component of a toxin-immunity protein module, which functions as a cellular contact-dependent growth inhibition (CDI) system. CDI modules allow bacteria to communicate with and inhibit the growth of closely related neighboring bacteria in a contact-dependent fashion. Bacteria that have this module inhibit or kill bacteria without it, giving them a growth advantage. Specifically inhibits the toxic activity of cognate toxin DddA (C-terminal 163 residue fragment) upon expression in E.coli. This chain is Double-stranded DNA deaminase immunity protein, found in Burkholderia cenocepacia (strain H111).